The chain runs to 83 residues: Small ribosomal subunit protein bS18A (83 aa).

The protein belongs to the bacterial ribosomal protein bS18 family. In terms of assembly, part of the 30S ribosomal subunit. Forms a tight heterodimer with protein bS6.

Its function is as follows. Binds as a heterodimer with protein bS6 to the central domain of the 16S rRNA, where it helps stabilize the platform of the 30S subunit. The chain is Small ribosomal subunit protein bS18A from Nocardia farcinica (strain IFM 10152).